The following is a 393-amino-acid chain: Methylthioribose kinase (393 aa).

ATP is bound by residues asparagine 38, lysine 53, and glutamate 107–leucine 109. Aspartate 225 contacts substrate. An ATP-binding site is contributed by aspartate 242–glutamate 244. Arginine 332 is a binding site for substrate.

The protein belongs to the methylthioribose kinase family. As to quaternary structure, homodimer.

The enzyme catalyses 5-(methylsulfanyl)-D-ribose + ATP = 5-(methylsulfanyl)-alpha-D-ribose 1-phosphate + ADP + H(+). Its pathway is amino-acid biosynthesis; L-methionine biosynthesis via salvage pathway; S-methyl-5-thio-alpha-D-ribose 1-phosphate from S-methyl-5'-thioadenosine (hydrolase route): step 2/2. Catalyzes the phosphorylation of methylthioribose into methylthioribose-1-phosphate. The chain is Methylthioribose kinase from Bacillus cereus (strain ZK / E33L).